Reading from the N-terminus, the 327-residue chain is MVKRIGVLTSGGDAPGMNAAIRGVVRSTLFKNKEVFGIYDGYQGLYDNQIQQLNRYSVSDIINRGGTILGSARFPEFTQKENRARAIKNLNSHGIDALVVIGGDGSYAGAELLAKEGGIHCVGLPGTIDNDVAGTDYSIGFFTALQTVVEAIDRLRDTSSSHQRISIVEVMGRHCGDLTLAAAIAGGCEFIVIPEVPFDRKELITEIKAGIAKGKKHAIITITERICDINELSQYIEKETKRETRPTVLGHIQRGGAPVAYDRILASRMGAYAVELLVQTDHKAILSCCVGVQNGKMRHAPISECISIDNKRQKFKEDWLDVANTLF.

Residue G12 coordinates ATP. ADP is bound by residues 22-26 and 55-60; these read RGVVR and RYSVSD. Residues 73–74 and 103–106 contribute to the ATP site; these read RF and GDGS. D104 serves as a coordination point for Mg(2+). 127–129 lines the substrate pocket; the sequence is TID. Catalysis depends on D129, which acts as the Proton acceptor. R156 contacts ADP. Residues R164 and 171–173 each bind substrate; that span reads MGR. ADP contacts are provided by residues 187 to 189, K213, and 215 to 217; these read GCE and KKH. Residues E224, R245, and 251–254 contribute to the substrate site; that span reads HIQR.

The protein belongs to the phosphofructokinase type A (PFKA) family. ATP-dependent PFK group I subfamily. Prokaryotic clade 'B1' sub-subfamily. Homotetramer. Mg(2+) serves as cofactor.

The protein resides in the cytoplasm. The catalysed reaction is beta-D-fructose 6-phosphate + ATP = beta-D-fructose 1,6-bisphosphate + ADP + H(+). The protein operates within carbohydrate degradation; glycolysis; D-glyceraldehyde 3-phosphate and glycerone phosphate from D-glucose: step 3/4. With respect to regulation, allosterically activated by ADP and other diphosphonucleosides, and allosterically inhibited by phosphoenolpyruvate. In terms of biological role, catalyzes the phosphorylation of D-fructose 6-phosphate to fructose 1,6-bisphosphate by ATP, the first committing step of glycolysis. This chain is ATP-dependent 6-phosphofructokinase, found in Hamiltonella defensa subsp. Acyrthosiphon pisum (strain 5AT).